A 260-amino-acid chain; its full sequence is Thiazole synthase (260 aa).

The active-site Schiff-base intermediate with DXP is lysine 96. Residues glycine 157, 184–185 (AG), and 206–207 (NT) contribute to the 1-deoxy-D-xylulose 5-phosphate site.

This sequence belongs to the ThiG family. As to quaternary structure, homotetramer. Forms heterodimers with either ThiH or ThiS.

The protein localises to the cytoplasm. It catalyses the reaction [ThiS sulfur-carrier protein]-C-terminal-Gly-aminoethanethioate + 2-iminoacetate + 1-deoxy-D-xylulose 5-phosphate = [ThiS sulfur-carrier protein]-C-terminal Gly-Gly + 2-[(2R,5Z)-2-carboxy-4-methylthiazol-5(2H)-ylidene]ethyl phosphate + 2 H2O + H(+). It participates in cofactor biosynthesis; thiamine diphosphate biosynthesis. Catalyzes the rearrangement of 1-deoxy-D-xylulose 5-phosphate (DXP) to produce the thiazole phosphate moiety of thiamine. Sulfur is provided by the thiocarboxylate moiety of the carrier protein ThiS. In vitro, sulfur can be provided by H(2)S. This Rhodopseudomonas palustris (strain BisA53) protein is Thiazole synthase.